The primary structure comprises 610 residues: MTRAQSAADDARNAMVAGLLASGISVNGLQPSHNPQVAAKMFTTATKLDPAMCDAWLARLLAGDQTMDVLAGAWAAVRTFGWETRRLGVTDLQFRPEVSDGLFLRLAVTSVDSLACAYAAVLAENKRYQEASDLLDTTDPKHPFDAELVSYVRGVLYFRTKRWPDVLAQFPEATPWRHPELKAAGAAMATTALASLGVFEEAFRRAQEAIEGDRVPGAANIALYTQGMCLRHVGREEEAVELLRRVYSRDAKFSPAREALDNPNYRLVLTDPETIEARKDPWDPDSAPTRAQTEAARHAEMAAKYLAEGDAELNAMLGMEQAKKEIKLIKSTTKVNLARAKMGLPVPVTSRHTLLLGPPGTGKTSVARAFTKQLCGLTVLRKPLVVETSRTKLLGRYMADAEKNTEEMLEGSLGGAVFFDEMHTLHEKGYSQGDPYGNAIINTLLLYMENHRDELVVFGAGYAKAMEKMLEVNQGLRRRFSTVIEFFSYTPEELIALTKLMGQENEDVITEEEAQVLLPSYTRFYNDQNYSEDGDLIRGIDMLGNAGFVRNVVEKARDHRSFRLDDEDLDAVLNSDLTEFSELQMRRFRELTKEDLAEGLSAAVAEKKTN.

ATP is bound at residue Gly357–Thr364.

Belongs to the CbxX/CfxQ family. As to quaternary structure, part of the ESX-5 / type VII secretion system (T7SS), which is composed of cytosolic and membrane components.

It localises to the cytoplasm. In terms of biological role, part of the ESX-5 specialized secretion system, which is responsible for the secretion of EsxN and a number of PE_PGRS and PPE proteins. EccA5 exhibits ATPase activity and may provide energy for the export of ESX-5 substrates. This is ESX-5 secretion system protein EccA5 from Mycobacterium marinum (strain ATCC BAA-535 / M).